The sequence spans 142 residues: Large ribosomal subunit protein uL13 (142 aa).

Belongs to the universal ribosomal protein uL13 family. Part of the 50S ribosomal subunit.

Its function is as follows. This protein is one of the early assembly proteins of the 50S ribosomal subunit, although it is not seen to bind rRNA by itself. It is important during the early stages of 50S assembly. The protein is Large ribosomal subunit protein uL13 of Chromobacterium violaceum (strain ATCC 12472 / DSM 30191 / JCM 1249 / CCUG 213 / NBRC 12614 / NCIMB 9131 / NCTC 9757 / MK).